The chain runs to 585 residues: Vacuolar protein 8 (585 aa).

G2 carries the N-myristoyl glycine lipid modification. 3 S-palmitoyl cysteine lipidation sites follow: C4, C5, and C7. 9 ARM repeats span residues 39-76 (NRSDVDFFSNGPLRALSTLVYSENIDLQRSAALAFAEI), 77-116 (TEKDVREVNRDVLEPILILLQSADSEVQRAACGALGNLAV), 118-157 (TENKILIVEMGGLEPLIRQMMSTNIEVQCNAVGCITNLAT), 159-198 (DDNKSKIAKSGALIPLTKLAKSKDIRVQRNATGALLNMTH), 200-239 (GENRQELVNAGAVPVLVSLLSNEDADVQYYCTTALSNIAV), 243-282 (NRKKLASTEPKLVGQLVHLMDSPSPRVQCQATLALRNLAS), 284-323 (SGYQVEIVRAGGLPHLVQLLTCNHQPLVLAAVACIRNISI), 325-365 (PLNE…NLAA), and 409-448 (DDLKPKLYESHIIDVLIPLTFSENGEVCGNSAAALANLCS). Residues 531 to 562 (QIGQTTTTTTTNITNNNTNTNTNTNTTTSTSN) are compositionally biased toward low complexity. The disordered stretch occupies residues 531 to 565 (QIGQTTTTTTTNITNNNTNTNTNTNTTTSTSNEDQ).

This sequence belongs to the beta-catenin family.

The protein resides in the vacuole membrane. In terms of biological role, functions in both vacuole inheritance and protein targeting from the cytoplasm to vacuole. Vacuole inheritance has a role in the regulation of hyphal cell division. This chain is Vacuolar protein 8 (VAC8), found in Candida albicans (strain SC5314 / ATCC MYA-2876) (Yeast).